The primary structure comprises 92 residues: Small ribosomal subunit protein uS19 (92 aa).

It belongs to the universal ribosomal protein uS19 family.

Its function is as follows. Protein S19 forms a complex with S13 that binds strongly to the 16S ribosomal RNA. In Dinoroseobacter shibae (strain DSM 16493 / NCIMB 14021 / DFL 12), this protein is Small ribosomal subunit protein uS19.